We begin with the raw amino-acid sequence, 192 residues long: Shikimate kinase (192 aa).

Residue 27-32 (GTGKTT) participates in ATP binding. Residue threonine 31 coordinates Mg(2+). The substrate site is built by aspartate 49, arginine 73, and glycine 95. An ATP-binding site is contributed by arginine 133. Arginine 152 is a substrate binding site.

Belongs to the shikimate kinase family. Monomer. Mg(2+) serves as cofactor.

It localises to the cytoplasm. The enzyme catalyses shikimate + ATP = 3-phosphoshikimate + ADP + H(+). It functions in the pathway metabolic intermediate biosynthesis; chorismate biosynthesis; chorismate from D-erythrose 4-phosphate and phosphoenolpyruvate: step 5/7. In terms of biological role, catalyzes the specific phosphorylation of the 3-hydroxyl group of shikimic acid using ATP as a cosubstrate. This chain is Shikimate kinase, found in Hahella chejuensis (strain KCTC 2396).